The primary structure comprises 301 residues: Phosducin-like protein (301 aa).

N-acetylthreonine is present on T2. Positions 15–60 (YYYSTSEDEDSDHEDKDRGRGAPASSSTPAEAELAGEGISVNTGPK) are disordered. A phosphoserine mark is found at S20 and S25. A compositionally biased stretch (low complexity) spans 36–49 (APASSSTPAEAELA). The Phosducin domain maps to 36-299 (APASSSTPAE…TCHSEDSDLE (264 aa)). Residues 158–301 (FKQVLEIPSG…HSEDSDLEID (144 aa)) are thioredoxin fold. S226, S293, and S296 each carry phosphoserine.

This sequence belongs to the phosducin family. Interacts with the CCT chaperonin complex. Forms a complex with the beta and gamma subunits of the GTP-binding protein, transducin.

Its subcellular location is the cell projection. The protein localises to the cilium. Functionally, functions as a co-chaperone for CCT in the assembly of heterotrimeric G protein complexes, facilitates the assembly of both Gbeta-Ggamma and RGS-Gbeta5 heterodimers. Also acts as a positive regulator of hedgehog signaling and regulates ciliary function. The chain is Phosducin-like protein (Pdcl) from Rattus norvegicus (Rat).